A 376-amino-acid chain; its full sequence is 23S rRNA (uracil(747)-C(5))-methyltransferase RlmC (376 aa).

[4Fe-4S] cluster is bound by residues Cys-3, Cys-11, Cys-14, and Cys-87. S-adenosyl-L-methionine-binding residues include Gln-212, Phe-241, Glu-262, and Asn-307. Cys-334 serves as the catalytic Nucleophile.

Belongs to the class I-like SAM-binding methyltransferase superfamily. RNA M5U methyltransferase family. RlmC subfamily.

The enzyme catalyses uridine(747) in 23S rRNA + S-adenosyl-L-methionine = 5-methyluridine(747) in 23S rRNA + S-adenosyl-L-homocysteine + H(+). In terms of biological role, catalyzes the formation of 5-methyl-uridine at position 747 (m5U747) in 23S rRNA. This is 23S rRNA (uracil(747)-C(5))-methyltransferase RlmC from Yersinia pseudotuberculosis serotype O:1b (strain IP 31758).